We begin with the raw amino-acid sequence, 83 residues long: Conotoxin LiCr95 (83 aa).

An N-terminal signal peptide occupies residues 1–22 (MKLTCALIVAMLFLTACQLTTT). Residues 23 to 50 (DDSRGRQKYPTERLRVKMRNPKLSKLTK) constitute a propeptide that is removed on maturation. 3 disulfide bridges follow: C52–C67, C59–C71, and C66–C80.

Belongs to the conotoxin O1 superfamily. In terms of tissue distribution, expressed by the venom duct.

It localises to the secreted. The sequence is that of Conotoxin LiCr95 from Conus lividus (Livid cone).